The primary structure comprises 397 residues: Acetate kinase (397 aa).

Position 8 (asparagine 8) interacts with Mg(2+). Lysine 15 is a binding site for ATP. Residue arginine 90 coordinates substrate. Aspartate 147 serves as the catalytic Proton donor/acceptor. ATP contacts are provided by residues 207–211, 283–285, and 330–334; these read HLGAG, DMR, and GVGEN. Glutamate 383 contributes to the Mg(2+) binding site.

This sequence belongs to the acetokinase family. In terms of assembly, homodimer. Requires Mg(2+) as cofactor. The cofactor is Mn(2+).

The protein localises to the cytoplasm. The enzyme catalyses acetate + ATP = acetyl phosphate + ADP. It participates in metabolic intermediate biosynthesis; acetyl-CoA biosynthesis; acetyl-CoA from acetate: step 1/2. Its function is as follows. Catalyzes the formation of acetyl phosphate from acetate and ATP. Can also catalyze the reverse reaction. In Fructilactobacillus sanfranciscensis (Lactobacillus sanfranciscensis), this protein is Acetate kinase.